The sequence spans 671 residues: DNA ligase (671 aa).

Residues 32 to 36, 81 to 82, and E113 each bind NAD(+); these read DAEYD and SL. K115 serves as the catalytic N6-AMP-lysine intermediate. Residues R136, E173, K290, and K314 each coordinate NAD(+). Zn(2+) contacts are provided by C408, C411, C426, and C432. The BRCT domain maps to 593 to 671; the sequence is EIDSPFAGKT…EAEMIRLLGA (79 aa).

This sequence belongs to the NAD-dependent DNA ligase family. LigA subfamily. The cofactor is Mg(2+). Requires Mn(2+) as cofactor.

The catalysed reaction is NAD(+) + (deoxyribonucleotide)n-3'-hydroxyl + 5'-phospho-(deoxyribonucleotide)m = (deoxyribonucleotide)n+m + AMP + beta-nicotinamide D-nucleotide.. Functionally, DNA ligase that catalyzes the formation of phosphodiester linkages between 5'-phosphoryl and 3'-hydroxyl groups in double-stranded DNA using NAD as a coenzyme and as the energy source for the reaction. It is essential for DNA replication and repair of damaged DNA. In Salmonella dublin (strain CT_02021853), this protein is DNA ligase.